We begin with the raw amino-acid sequence, 410 residues long: LL-diaminopimelate aminotransferase (410 aa).

The substrate site is built by tyrosine 15 and glycine 42. Pyridoxal 5'-phosphate-binding positions include tyrosine 72, 108–109, tyrosine 132, asparagine 187, tyrosine 218, and 246–248; these read AK and SFS. Lysine 109, tyrosine 132, and asparagine 187 together coordinate substrate. The residue at position 249 (lysine 249) is an N6-(pyridoxal phosphate)lysine. Residues arginine 257 and asparagine 292 each contribute to the pyridoxal 5'-phosphate site. Substrate is bound by residues asparagine 292 and arginine 388.

Belongs to the class-I pyridoxal-phosphate-dependent aminotransferase family. LL-diaminopimelate aminotransferase subfamily. In terms of assembly, homodimer. Requires pyridoxal 5'-phosphate as cofactor.

It catalyses the reaction (2S,6S)-2,6-diaminopimelate + 2-oxoglutarate = (S)-2,3,4,5-tetrahydrodipicolinate + L-glutamate + H2O + H(+). The protein operates within amino-acid biosynthesis; L-lysine biosynthesis via DAP pathway; LL-2,6-diaminopimelate from (S)-tetrahydrodipicolinate (aminotransferase route): step 1/1. Functionally, involved in the synthesis of meso-diaminopimelate (m-DAP or DL-DAP), required for both lysine and peptidoglycan biosynthesis. Catalyzes the direct conversion of tetrahydrodipicolinate to LL-diaminopimelate. This Picosynechococcus sp. (strain ATCC 27264 / PCC 7002 / PR-6) (Agmenellum quadruplicatum) protein is LL-diaminopimelate aminotransferase.